Here is a 141-residue protein sequence, read N- to C-terminus: Hemoglobin subunit alpha-3 (141 aa).

Ser1 carries the N-acetylserine modification. The region spanning 1 to 141 (SLSASEKAAV…VSAVLTSKYR (141 aa)) is the Globin domain. Position 58 (His58) interacts with O2. Position 87 (His87) interacts with heme b.

Belongs to the globin family. As to quaternary structure, heterotetramer of two alpha chains and two beta chains. In terms of tissue distribution, red blood cells.

In terms of biological role, this is a tadpole (larval) alpha chain. This is Hemoglobin subunit alpha-3 from Aquarana catesbeiana (American bullfrog).